The following is a 298-amino-acid chain: Zinc import ATP-binding protein ZnuC (298 aa).

Residues 17 to 232 (IELRNAGVYR…PEYVRLFGSR (216 aa)) form the ABC transporter domain. Residue 49–56 (GQNGAGKS) coordinates ATP. The disordered stretch occupies residues 273–298 (RGHCHVEDGHHHDHEHHHHEGGQPRA). The segment covering 276–298 (CHVEDGHHHDHEHHHHEGGQPRA) has biased composition (basic and acidic residues).

This sequence belongs to the ABC transporter superfamily. Zinc importer (TC 3.A.1.15.5) family. The complex is composed of two ATP-binding proteins (ZnuC), two transmembrane proteins (ZnuB) and a solute-binding protein (ZnuA).

Its subcellular location is the cell inner membrane. It catalyses the reaction Zn(2+)(out) + ATP(in) + H2O(in) = Zn(2+)(in) + ADP(in) + phosphate(in) + H(+)(in). In terms of biological role, part of the ABC transporter complex ZnuABC involved in zinc import. Responsible for energy coupling to the transport system. The polypeptide is Zinc import ATP-binding protein ZnuC (Brucella melitensis biotype 1 (strain ATCC 23456 / CCUG 17765 / NCTC 10094 / 16M)).